A 194-amino-acid chain; its full sequence is Fe/S biogenesis protein NfuA (194 aa).

The [4Fe-4S] cluster site is built by Cys152 and Cys155.

It belongs to the NfuA family. As to quaternary structure, homodimer. [4Fe-4S] cluster is required as a cofactor.

Its function is as follows. Involved in iron-sulfur cluster biogenesis. Binds a 4Fe-4S cluster, can transfer this cluster to apoproteins, and thereby intervenes in the maturation of Fe/S proteins. Could also act as a scaffold/chaperone for damaged Fe/S proteins. In Ectopseudomonas mendocina (strain ymp) (Pseudomonas mendocina), this protein is Fe/S biogenesis protein NfuA.